A 62-amino-acid chain; its full sequence is Photosystem II reaction center protein Z (62 aa).

2 helical membrane passes run 8 to 28 and 41 to 61; these read AVFA…VVFA and FSGT…NSLI.

Belongs to the PsbZ family. PSII is composed of 1 copy each of membrane proteins PsbA, PsbB, PsbC, PsbD, PsbE, PsbF, PsbH, PsbI, PsbJ, PsbK, PsbL, PsbM, PsbT, PsbY, PsbZ, Psb30/Ycf12, at least 3 peripheral proteins of the oxygen-evolving complex and a large number of cofactors. It forms dimeric complexes.

Its subcellular location is the plastid. It localises to the chloroplast thylakoid membrane. May control the interaction of photosystem II (PSII) cores with the light-harvesting antenna, regulates electron flow through the 2 photosystem reaction centers. PSII is a light-driven water plastoquinone oxidoreductase, using light energy to abstract electrons from H(2)O, generating a proton gradient subsequently used for ATP formation. This Arabidopsis thaliana (Mouse-ear cress) protein is Photosystem II reaction center protein Z.